A 118-amino-acid chain; its full sequence is Autophagy-related protein 8D (118 aa).

A lipid anchor (Phosphatidylethanolamine amidated glycine) is attached at Gly118.

The protein belongs to the ATG8 family. Interacts with ATG4. Post-translationally, the C-terminal Gly is amidated with phosphatidylethanolamine by an activating system similar to that for ubiquitin.

The protein resides in the cytoplasmic vesicle. It localises to the autophagosome membrane. It is found in the vacuole membrane. The protein localises to the cytoplasm. Its subcellular location is the cytoskeleton. Functionally, ubiquitin-like modifier involved in autophagosomes formation. May mediate the delivery of the autophagosomes to the vacuole via the microtubule cytoskeleton. This is Autophagy-related protein 8D (ATG8D) from Oryza sativa subsp. japonica (Rice).